The sequence spans 138 residues: Cell division protein SepF (138 aa).

Residues 1–59 form a disordered region; the sequence is MNNKFKDFFGFGDNDSYEERDAYEEHYDEQEEMQNSNRPTNSRDSNVVSIKAGQAGSGP. The span at 33 to 48 shows a compositional bias: polar residues; it reads MQNSNRPTNSRDSNVV.

It belongs to the SepF family. In terms of assembly, homodimer. Interacts with FtsZ.

The protein localises to the cytoplasm. In terms of biological role, cell division protein that is part of the divisome complex and is recruited early to the Z-ring. Probably stimulates Z-ring formation, perhaps through the cross-linking of FtsZ protofilaments. Its function overlaps with FtsA. The chain is Cell division protein SepF from Lactobacillus delbrueckii subsp. bulgaricus (strain ATCC 11842 / DSM 20081 / BCRC 10696 / JCM 1002 / NBRC 13953 / NCIMB 11778 / NCTC 12712 / WDCM 00102 / Lb 14).